A 510-amino-acid chain; its full sequence is Histidine ammonia-lyase (510 aa).

A cross-link (5-imidazolinone (Ala-Gly)) is located at residues 143–145 (ASG). 2,3-didehydroalanine (Ser) is present on Ser144.

Belongs to the PAL/histidase family. Post-translationally, contains an active site 4-methylidene-imidazol-5-one (MIO), which is formed autocatalytically by cyclization and dehydration of residues Ala-Ser-Gly.

It localises to the cytoplasm. It catalyses the reaction L-histidine = trans-urocanate + NH4(+). It functions in the pathway amino-acid degradation; L-histidine degradation into L-glutamate; N-formimidoyl-L-glutamate from L-histidine: step 1/3. The chain is Histidine ammonia-lyase from Photobacterium profundum (strain SS9).